A 34-amino-acid polypeptide reads, in one-letter code: MSDIN-like toxin proprotein 4 (34 aa).

The propeptide occupies 1 to 10 (MSDINTARLP). Residues 11–20 (LFLPPVRMPP) constitute a cross-link (cyclopeptide (Leu-Pro)). The propeptide occupies 21–34 (CVGDDIEMVLTRGE).

This sequence belongs to the MSDIN fungal toxin family. Processed by the macrocyclase-peptidase enzyme POPB to yield a toxic cyclic decapeptide. POPB first removes 10 residues from the N-terminus. Conformational trapping of the remaining peptide forces the enzyme to release this intermediate rather than proceed to macrocyclization. The enzyme rebinds the remaining peptide in a different conformation and catalyzes macrocyclization of the N-terminal 10 residues.

In terms of biological role, probable toxin that belongs to the MSDIN-like toxin family responsible for a large number of food poisoning cases and deaths. In Amanita bisporigera (Destroying angel), this protein is MSDIN-like toxin proprotein 4.